Consider the following 682-residue polypeptide: Protein PilJ (682 aa).

The Cytoplasmic segment spans residues 1–14 (MKKINAGNLFAGMR). A helical transmembrane segment spans residues 15-38 (SSSVIAGLFIVLIVSIVLLFANFA). The Periplasmic segment spans residues 39 to 306 (YLNTQSNHDK…DGFENLAGGR (268 aa)). The chain crosses the membrane as a helical span at residues 307-333 (SINLFAGYALGALALASIILIGLVMVR). The Cytoplasmic portion of the chain corresponds to 334–682 (ETNRRLAETA…FKLPEGVEQA (349 aa)). Positions 347–398 (DRNQAAILRLLDEIADLADGDLTVAATVTEDFTGAIADSINYSIDQLRELVE) constitute an HAMP domain. Residues 403–639 (TAVQVAAAAQ…HISNTMNVIQ (237 aa)) enclose the Methyl-accepting transducer domain.

The protein belongs to the methyl-accepting chemotaxis (MCP) protein family.

The protein resides in the cell inner membrane. May be a part of a signal-transduction system that regulates twitching motility by controlling pilus function (extension and retraction). The polypeptide is Protein PilJ (pilJ) (Pseudomonas aeruginosa (strain ATCC 15692 / DSM 22644 / CIP 104116 / JCM 14847 / LMG 12228 / 1C / PRS 101 / PAO1)).